Consider the following 385-residue polypeptide: Lipoyl synthase, mitochondrial (385 aa).

Residues 18 to 40 (TKAKNRTFSSSTVESSTKQPPQF) are disordered. [4Fe-4S] cluster contacts are provided by cysteine 113, cysteine 118, cysteine 124, cysteine 144, cysteine 148, cysteine 151, and serine 360. A Radical SAM core domain is found at 129–349 (ETGTATATIM…KTLGMEMGFR (221 aa)).

This sequence belongs to the radical SAM superfamily. Lipoyl synthase family. It depends on [4Fe-4S] cluster as a cofactor.

The protein resides in the mitochondrion. The enzyme catalyses [[Fe-S] cluster scaffold protein carrying a second [4Fe-4S](2+) cluster] + N(6)-octanoyl-L-lysyl-[protein] + 2 oxidized [2Fe-2S]-[ferredoxin] + 2 S-adenosyl-L-methionine + 4 H(+) = [[Fe-S] cluster scaffold protein] + N(6)-[(R)-dihydrolipoyl]-L-lysyl-[protein] + 4 Fe(3+) + 2 hydrogen sulfide + 2 5'-deoxyadenosine + 2 L-methionine + 2 reduced [2Fe-2S]-[ferredoxin]. Its pathway is protein modification; protein lipoylation via endogenous pathway; protein N(6)-(lipoyl)lysine from octanoyl-[acyl-carrier-protein]: step 2/2. Functionally, catalyzes the radical-mediated insertion of two sulfur atoms into the C-6 and C-8 positions of the octanoyl moiety bound to the lipoyl domains of lipoate-dependent enzymes, thereby converting the octanoylated domains into lipoylated derivatives. This is Lipoyl synthase, mitochondrial from Populus trichocarpa (Western balsam poplar).